The primary structure comprises 348 residues: 4-hydroxyphenylpyruvate dioxygenase (348 aa).

VOC domains follow at residues 11-141 and 151-303; these read GFAF…ITSP and AIDH…IFTE. Histidine 154, histidine 232, and glutamate 312 together coordinate Fe cation.

It belongs to the 4HPPD family. Fe cation serves as cofactor.

The catalysed reaction is 3-(4-hydroxyphenyl)pyruvate + O2 = homogentisate + CO2. In terms of biological role, catalyzes the transformation of p-hydroxyphenylpyruvate into HGA. Has hemolytic and brown pigment production activity. The sequence is that of 4-hydroxyphenylpyruvate dioxygenase (lly) from Legionella pneumophila subsp. pneumophila (strain Philadelphia 1 / ATCC 33152 / DSM 7513).